A 55-amino-acid chain; its full sequence is Ribosome modulation factor (55 aa).

The protein belongs to the ribosome modulation factor family. In terms of assembly, associates exclusively with 100S ribosomes.

It localises to the cytoplasm. During stationary phase, converts 70S ribosomes to an inactive dimeric form (100S ribosomes). May form immature 90S particles, which are converted to mature 100S ribosomes by the hibernation promoting factor Hpf. This chain is Ribosome modulation factor, found in Escherichia coli O157:H7.